A 159-amino-acid chain; its full sequence is uncharacterized protein (159 aa).

3 helical membrane-spanning segments follow: residues Phe10 to Phe30, Met52 to Leu72, and Leu96 to Thr116.

The protein resides in the membrane. This is an uncharacterized protein from Escherichia coli (strain K12).